The primary structure comprises 383 residues: Flagellum-associated coiled-coil domain-containing protein 1 (383 aa).

The disordered stretch occupies residues 26-79 (PYPLPKHPTGKFKPVLPPPISKEHNSLLSQPGKSTVSPRDKVQSGNTESSKAPS). Residues 51–77 (SLLSQPGKSTVSPRDKVQSGNTESSKA) show a composition bias toward polar residues. Coiled-coil stretches lie at residues 125–220 (TDII…YLKS) and 276–359 (KKMN…FQTK). Residue lysine 354 is modified to N6-acetyllysine.

In terms of tissue distribution, isoform 1 is specific to germ cells of the testis and localizes to the principal piece of the sperm flagellum. Isoform 2 seems to be expressed mainly in somatic cells of the testis, and is not detected in mature spermatozoa (at protein level). Isoform 2 may also be expressed weakly in brain.

The protein resides in the cytoplasm. It localises to the cytoplasmic granule. It is found in the cell projection. The protein localises to the cilium. Its subcellular location is the flagellum. In Mus musculus (Mouse), this protein is Flagellum-associated coiled-coil domain-containing protein 1.